Consider the following 146-residue polypeptide: uncharacterized protein (146 aa).

This is an uncharacterized protein from Acidianus filamentous virus 2 (isolate Italy/Pozzuoli) (AFV-2).